We begin with the raw amino-acid sequence, 348 residues long: N6-Methyl-AMP deaminase (348 aa).

Histidine 18 and histidine 20 together coordinate Zn(2+). N(6)-methyl-AMP contacts are provided by residues histidine 20, asparagine 22, histidine 68, 100–103, aspartate 142, and glycine 175; that span reads STPR. Histidine 202 is a Zn(2+) binding site. N(6)-methyl-AMP-binding residues include glutamate 205, aspartate 287, and aspartate 288. Catalysis depends on glutamate 205, which acts as the Proton donor. A Zn(2+)-binding site is contributed by aspartate 287.

This sequence belongs to the metallo-dependent hydrolases superfamily. Adenosine and AMP deaminases family. In terms of assembly, monomer. It depends on Zn(2+) as a cofactor.

It carries out the reaction N(6)-methyl-AMP + H2O + H(+) = IMP + methylamine. Functionally, catalyzes the hydrolysis of the free cytosolic methylated adenosine nucleotide N(6)-methyl-AMP (N6-mAMP) to produce inositol monophosphate (IMP) and methylamine. Is required for the catabolism of cytosolic N6-mAMP, which is derived from the degradation of mRNA containing N6-methylated adenine (m6A). This Danio rerio (Zebrafish) protein is N6-Methyl-AMP deaminase (mapda).